Reading from the N-terminus, the 881-residue chain is Serine/threonine-protein phosphatase BSL1 (881 aa).

Kelch repeat units follow at residues 60–109, 269–320, and 338–385; these read GSSS…AVGT, RLHV…DQDP, and RIYV…PRFS. 2 disordered regions span residues 368–407 and 436–464; these read SPLL…LSLD and AGTL…ANEG. Composition is skewed to polar residues over residues 374 to 383 and 445 to 460; these read DRTQQSSTPR and TSDA…TDGT. Ser491 is subject to Phosphoserine. The segment at 503 to 522 is disordered; that stretch reads VPMNNSDVPQPTKKFTRQKS. 4 residues coordinate Mn(2+): Asp584, His586, Asp618, and Asn650. Residue His651 is the Proton donor of the active site. His703 and His782 together coordinate Mn(2+). A disordered region spans residues 837–881; it reads ILSPENSPEHSGDDAWMQELNIQRPPTPTRGRPQPDFDRSSLAYI. A Phosphoserine modification is found at Ser839.

It belongs to the PPP phosphatase family. BSU subfamily. Interacts with CDG1 and CDL1. The cofactor is Mn(2+). Expressed in mature cauline leaves and at the tip of influorescence, including flowers. Expressed at lower level in young tissues relative to older ones.

The protein resides in the nucleus. It carries out the reaction O-phospho-L-seryl-[protein] + H2O = L-seryl-[protein] + phosphate. It catalyses the reaction O-phospho-L-threonyl-[protein] + H2O = L-threonyl-[protein] + phosphate. Phosphatase involved in elongation process, probably by acting as a regulator of brassinolide signaling. The sequence is that of Serine/threonine-protein phosphatase BSL1 (BSL1) from Arabidopsis thaliana (Mouse-ear cress).